The chain runs to 205 residues: Ras-related protein Rab-1A (205 aa).

Residue S2 is modified to N-acetylserine. GTP-binding residues include S20, G21, G23, K24, S25, C26, E38, and T43. S25 contacts Mg(2+). Residues 34-48 carry the Switch 1 motif; it reads DTYTESYISTIGVDF. T43 provides a ligand contact to Mg(2+). Glycyl lysine isopeptide (Lys-Gly) (interchain with G-Cter in ubiquitin) cross-links involve residues K49 and K61. Residue D66 participates in Mg(2+) binding. The short motif at 66-83 is the Switch 2 element; the sequence is DTAGQERFRTITSSYYRG. Positions 69, 124, 125, 127, 155, and 156 each coordinate GTP. The segment at 178–205 is disordered; that stretch reads PGATAGGAEKSNVKIQSTPVKQSGGGCC. S194 carries the phosphoserine; by CDK1 modification. S-geranylgeranyl cysteine attachment occurs at residues C204 and C205.

The protein belongs to the small GTPase superfamily. Rab family. May interact with YIPF5. Interacts with C9orf72; the interaction mediates recruitment of RAB1A to the ATG1/ULK1 kinase complex. Interacts with GDI1; this promotes dissociation from membranes. It depends on Mg(2+) as a cofactor. In terms of processing, phosphorylated by CDK1 kinase during mitosis. Ubiquitinated via 'Lys-11'-linked ubiquitination on Lys-49 and Lys-61; impairing the recruitment of guanosine diphosphate (GDP) dissociation inhibitor 1/GDI1.

Its subcellular location is the golgi apparatus. It is found in the endoplasmic reticulum. The protein resides in the early endosome. The protein localises to the cytoplasm. It localises to the cytosol. Its subcellular location is the membrane. It is found in the melanosome. It carries out the reaction GTP + H2O = GDP + phosphate + H(+). Regulated by guanine nucleotide exchange factors (GEFs) which promote the exchange of bound GDP for free GTP. Regulated by GTPase activating proteins (GAPs) which increase the GTP hydrolysis activity. Inhibited by GDP dissociation inhibitors (GDIs). In terms of biological role, the small GTPases Rab are key regulators of intracellular membrane trafficking, from the formation of transport vesicles to their fusion with membranes. Rabs cycle between an inactive GDP-bound form and an active GTP-bound form that is able to recruit to membranes different sets of downstream effectors directly responsible for vesicle formation, movement, tethering and fusion. RAB1A regulates vesicular protein transport from the endoplasmic reticulum (ER) to the Golgi compartment and on to the cell surface, and plays a role in IL-8 and growth hormone secretion. Required to modulate the compacted morphology of the Golgi. Regulates the level of CASR present at the cell membrane. Plays a role in cell adhesion and cell migration, via its role in protein trafficking. Plays a role in autophagosome assembly and cellular defense reactions against pathogenic bacteria. Plays a role in microtubule-dependent protein transport by early endosomes and in anterograde melanosome transport. The chain is Ras-related protein Rab-1A (RAB1A) from Sus scrofa (Pig).